Consider the following 254-residue polypeptide: tRNA (guanine-N(1)-)-methyltransferase (254 aa).

Residues glycine 119 and 139 to 144 (IGDFVL) contribute to the S-adenosyl-L-methionine site.

The protein belongs to the RNA methyltransferase TrmD family. In terms of assembly, homodimer.

The protein resides in the cytoplasm. It catalyses the reaction guanosine(37) in tRNA + S-adenosyl-L-methionine = N(1)-methylguanosine(37) in tRNA + S-adenosyl-L-homocysteine + H(+). In terms of biological role, specifically methylates guanosine-37 in various tRNAs. This is tRNA (guanine-N(1)-)-methyltransferase from Dechloromonas aromatica (strain RCB).